The sequence spans 475 residues: Sulfate adenylyltransferase subunit 1 (475 aa).

Positions 25–239 (KSLLRFLTCG…EVLETVEIQR (215 aa)) constitute a tr-type G domain. A G1 region spans residues 34–41 (GSVDDGKS). GTP is bound at residue 34–41 (GSVDDGKS). The segment at 92-96 (GITID) is G2. The interval 113 to 116 (DTPG) is G3. Residues 113-117 (DTPGH) and 168-171 (NKMD) each bind GTP. The segment at 168–171 (NKMD) is G4. The segment at 206–208 (SAL) is G5.

This sequence belongs to the TRAFAC class translation factor GTPase superfamily. Classic translation factor GTPase family. CysN/NodQ subfamily. Heterodimer composed of CysD, the smaller subunit, and CysN.

It catalyses the reaction sulfate + ATP + H(+) = adenosine 5'-phosphosulfate + diphosphate. The protein operates within sulfur metabolism; hydrogen sulfide biosynthesis; sulfite from sulfate: step 1/3. Functionally, with CysD forms the ATP sulfurylase (ATPS) that catalyzes the adenylation of sulfate producing adenosine 5'-phosphosulfate (APS) and diphosphate, the first enzymatic step in sulfur assimilation pathway. APS synthesis involves the formation of a high-energy phosphoric-sulfuric acid anhydride bond driven by GTP hydrolysis by CysN coupled to ATP hydrolysis by CysD. The chain is Sulfate adenylyltransferase subunit 1 from Shigella sonnei (strain Ss046).